Consider the following 206-residue polypeptide: Glycerol-3-phosphate acyltransferase (206 aa).

Transmembrane regions (helical) follow at residues 14 to 34 (IALAAAVIGYLLGSIPFGLIL), 67 to 87 (ATLLLDALKASAAAWIVGYFL), 91 to 111 (AAIIAGFFAFIGHLFPVWIGF), 124 to 144 (LLGVAPIMVVLFAAVWLAVAV), and 148 to 168 (YSSLSALVAMLVIPVALLILG).

It belongs to the PlsY family. Probably interacts with PlsX.

It is found in the cell inner membrane. The enzyme catalyses an acyl phosphate + sn-glycerol 3-phosphate = a 1-acyl-sn-glycero-3-phosphate + phosphate. The protein operates within lipid metabolism; phospholipid metabolism. In terms of biological role, catalyzes the transfer of an acyl group from acyl-phosphate (acyl-PO(4)) to glycerol-3-phosphate (G3P) to form lysophosphatidic acid (LPA). This enzyme utilizes acyl-phosphate as fatty acyl donor, but not acyl-CoA or acyl-ACP. The protein is Glycerol-3-phosphate acyltransferase of Rhizobium etli (strain ATCC 51251 / DSM 11541 / JCM 21823 / NBRC 15573 / CFN 42).